The chain runs to 124 residues: uncharacterized protein (124 aa).

Positions 1–21 (MFLLSLLHFFHPSLIPSLSLS) are cleaved as a signal peptide.

This is an uncharacterized protein from Schizosaccharomyces pombe (strain 972 / ATCC 24843) (Fission yeast).